The chain runs to 148 residues: 3-hydroxyacyl-[acyl-carrier-protein] dehydratase FabZ (148 aa).

The active site involves histidine 50.

Belongs to the thioester dehydratase family. FabZ subfamily.

The protein resides in the cytoplasm. The catalysed reaction is a (3R)-hydroxyacyl-[ACP] = a (2E)-enoyl-[ACP] + H2O. Its function is as follows. Involved in unsaturated fatty acids biosynthesis. Catalyzes the dehydration of short chain beta-hydroxyacyl-ACPs and long chain saturated and unsaturated beta-hydroxyacyl-ACPs. This is 3-hydroxyacyl-[acyl-carrier-protein] dehydratase FabZ from Levilactobacillus brevis (strain ATCC 367 / BCRC 12310 / CIP 105137 / JCM 1170 / LMG 11437 / NCIMB 947 / NCTC 947) (Lactobacillus brevis).